Consider the following 283-residue polypeptide: Gap junction beta-1 protein (283 aa).

The Cytoplasmic portion of the chain corresponds to 1-22 (MNWTGLYTLLSGVNRHSTAIGR). A helical membrane pass occupies residues 23 to 45 (VWLSVIFIFRIMVLVVAAESVWG). Residues 46 to 75 (DEKSSFICNTLQPGCNSVCYDQFFPISHVR) lie on the Extracellular side of the membrane. Residues 76–95 (LWSLQLILVSTPALLVAMHV) traverse the membrane as a helical segment. Over 96–130 (AHQQHIEKKMLRLEGHGDPLHLEEVKRHKVHISGT) the chain is Cytoplasmic. Residues 131–153 (LWWAYVISVVFRLLFEAVFMYVF) form a helical membrane-spanning segment. Residues 154–191 (YLLYPGYAMVRLVKCDVYPCPNTVDCFVSRPTEKTVFT) lie on the Extracellular side of the membrane. A helical membrane pass occupies residues 192 to 214 (VFMLAASGICIILNVAEVVYLII). Over 215 to 283 (RACARRAQRR…AEKSDRCSAC (69 aa)) the chain is Cytoplasmic. A phosphoserine mark is found at S233, S258, S266, and S277.

Belongs to the connexin family. Beta-type (group I) subfamily. In terms of assembly, a connexon is composed of a hexamer of connexins. Interacts with CNST.

Its subcellular location is the cell membrane. It localises to the cell junction. The protein resides in the gap junction. One gap junction consists of a cluster of closely packed pairs of transmembrane channels, the connexons, through which materials of low MW diffuse from one cell to a neighboring cell. This chain is Gap junction beta-1 protein (GJB1), found in Macaca fascicularis (Crab-eating macaque).